Consider the following 415-residue polypeptide: ORC1-type DNA replication protein 2 (415 aa).

Residues 69 to 73 (TGKSV), Tyr-215, and Arg-227 contribute to the ATP site.

The protein belongs to the CDC6/cdc18 family.

Involved in regulation of DNA replication. The protein is ORC1-type DNA replication protein 2 (cdc6-2) of Sulfolobus acidocaldarius (strain ATCC 33909 / DSM 639 / JCM 8929 / NBRC 15157 / NCIMB 11770).